A 318-amino-acid polypeptide reads, in one-letter code: Phosphoenolpyruvate transferase (318 aa).

Asp50 lines the 7,8-didemethyl-8-hydroxy-5-deazariboflavin pocket.

It belongs to the CofD family. Homodimer. The cofactor is Mg(2+).

It catalyses the reaction enolpyruvoyl-2-diphospho-5'-guanosine + 7,8-didemethyl-8-hydroxy-5-deazariboflavin = dehydro coenzyme F420-0 + GMP + H(+). It participates in cofactor biosynthesis; coenzyme F420 biosynthesis. In terms of biological role, catalyzes the transfer of the phosphoenolpyruvate moiety from enoylpyruvoyl-2-diphospho-5'-guanosine (EPPG) to 7,8-didemethyl-8-hydroxy-5-deazariboflavin (FO) with the formation of dehydro coenzyme F420-0 and GMP. This is Phosphoenolpyruvate transferase from Streptomyces griseus subsp. griseus (strain JCM 4626 / CBS 651.72 / NBRC 13350 / KCC S-0626 / ISP 5235).